Reading from the N-terminus, the 428-residue chain is Aerobic C4-dicarboxylate transport protein (428 aa).

Transmembrane regions (helical) follow at residues 5–27, 47–64, 77–99, 141–163, 184–206, 219–241, 326–348, and 352–374; these read LFKS…GHFY, MIIA…IAGM, ALLY…VNVV, VIGA…FGFA, VIFG…AMAF, LGQL…LGSI, IVHQ…GVTG, and IVLA…LILG.

The protein belongs to the dicarboxylate/amino acid:cation symporter (DAACS) (TC 2.A.23) family.

It is found in the cell inner membrane. In terms of biological role, responsible for the aerobic transport of the dicarboxylates fumarate and malate and to a lesser extent succinate, from the periplasm across the inner membrane. This chain is Aerobic C4-dicarboxylate transport protein, found in Escherichia coli O157:H7.